The chain runs to 781 residues: Molybdenum cofactor sulfurase (781 aa).

At Lys-246 the chain carries N6-(pyridoxal phosphate)lysine. Cys-413 is an active-site residue. An MOSC domain is found at 619–781; that stretch reads GDAVAQWLSE…MTCGDVVIVE (163 aa). Ser-734 carries the post-translational modification Phosphoserine.

It belongs to the class-V pyridoxal-phosphate-dependent aminotransferase family. MOCOS subfamily. It depends on pyridoxal 5'-phosphate as a cofactor.

It carries out the reaction Mo-molybdopterin + L-cysteine + AH2 = thio-Mo-molybdopterin + L-alanine + A + H2O. Its pathway is cofactor biosynthesis; molybdopterin biosynthesis. Sulfurates the molybdenum cofactor. Sulfation of molybdenum is essential for xanthine dehydrogenase (XDH) and aldehyde oxidase (ADO) enzymes in which molybdenum cofactor is liganded by 1 oxygen and 1 sulfur atom in active form. This is Molybdenum cofactor sulfurase from Drosophila erecta (Fruit fly).